The following is a 175-amino-acid chain: Large ribosomal subunit protein uL16 (175 aa).

This sequence belongs to the universal ribosomal protein uL16 family.

The polypeptide is Large ribosomal subunit protein uL16 (Caldivirga maquilingensis (strain ATCC 700844 / DSM 13496 / JCM 10307 / IC-167)).